A 401-amino-acid chain; its full sequence is Probable acid ceramidase (401 aa).

Residues 1-22 (MKPVAISLSLLLLVTLLPGSEQ) form the signal peptide. Residues Asn101, Asn303, and Asn371 are each glycosylated (N-linked (GlcNAc...) asparagine).

This sequence belongs to the acid ceramidase family.

It catalyses the reaction an N-acyl-sphingoid base + H2O = a sphingoid base + a fatty acid. It carries out the reaction an N-acylsphing-4-enine + H2O = sphing-4-enine + a fatty acid. The enzyme catalyses an N-acyl-15-methylhexadecasphing-4-enine + H2O = 15-methylhexadecasphing-4-enine + a fatty acid. Functionally, catalyzes the hydrolysis of ceramides into sphingoid base and free fatty acid. C.elegans contain specific sphingoid bases, which are unique or different in structure compared to the sphingoid bases found in other animals. Two examples of these distinctive compounds are: 15-methylhexadecasphinganine and 15-methylhexadecasphing-4-enine. The chain is Probable acid ceramidase from Caenorhabditis elegans.